The primary structure comprises 147 residues: Large ribosomal subunit protein uL13 (147 aa).

The tract at residues 128–147 (DQHPHGAQQPQPFEITQVAQ) is disordered.

This sequence belongs to the universal ribosomal protein uL13 family. As to quaternary structure, part of the 50S ribosomal subunit.

This protein is one of the early assembly proteins of the 50S ribosomal subunit, although it is not seen to bind rRNA by itself. It is important during the early stages of 50S assembly. The protein is Large ribosomal subunit protein uL13 of Streptomyces coelicolor (strain ATCC BAA-471 / A3(2) / M145).